Here is a 301-residue protein sequence, read N- to C-terminus: CPX chromosomal region candidate gene 1 protein (301 aa).

Positions 1 to 77 (MSYPTKEGSD…ENSELETEIQ (77 aa)) are disordered. Polar residues predominate over residues 44 to 60 (VETNPINREPGTATSQE).

In terms of tissue distribution, expressed in a variety of fetal tissues.

The protein is CPX chromosomal region candidate gene 1 protein (CPXCR1) of Homo sapiens (Human).